The chain runs to 264 residues: tRNA (guanine-N(1)-)-methyltransferase (264 aa).

S-adenosyl-L-methionine-binding positions include Gly-113 and 133–138; that span reads IGDYVL. Positions 244 to 264 are disordered; it reads VQQAATPGGQRRPPWHRDSRA.

Belongs to the RNA methyltransferase TrmD family. In terms of assembly, homodimer.

The protein localises to the cytoplasm. The enzyme catalyses guanosine(37) in tRNA + S-adenosyl-L-methionine = N(1)-methylguanosine(37) in tRNA + S-adenosyl-L-homocysteine + H(+). Specifically methylates guanosine-37 in various tRNAs. The chain is tRNA (guanine-N(1)-)-methyltransferase from Frankia alni (strain DSM 45986 / CECT 9034 / ACN14a).